Reading from the N-terminus, the 185-residue chain is Orotate phosphoribosyltransferase (185 aa).

5-phospho-alpha-D-ribose 1-diphosphate-binding positions include Arg99, Lys100, Lys103, and 125-133 (EDVTTTGGS). Thr129 and Arg157 together coordinate orotate.

The protein belongs to the purine/pyrimidine phosphoribosyltransferase family. PyrE subfamily. As to quaternary structure, homodimer. Mg(2+) serves as cofactor.

It catalyses the reaction orotidine 5'-phosphate + diphosphate = orotate + 5-phospho-alpha-D-ribose 1-diphosphate. Its pathway is pyrimidine metabolism; UMP biosynthesis via de novo pathway; UMP from orotate: step 1/2. Catalyzes the transfer of a ribosyl phosphate group from 5-phosphoribose 1-diphosphate to orotate, leading to the formation of orotidine monophosphate (OMP). This is Orotate phosphoribosyltransferase from Methanococcus maripaludis (strain DSM 14266 / JCM 13030 / NBRC 101832 / S2 / LL).